We begin with the raw amino-acid sequence, 212 residues long: MSYTTQQIIEKLRELKIVPVIALDNADDILPLADTLAKNGLSVAEITFRSEAAADAIRLLRANRPDFLIAAGTVLTAEQVVLAKSSGADFVVTPGLNPKIVKLCQDLNFPITPGVNNPMAIEIALEMGISAVKFFPAEASGGVKMIKALLGPYAQLQIMPTGGIGLHNIRDYLAIPNIVACGGSWFVEKKLIQSNNWDEIGRLVREVIDIIK.

Residue Glu45 is the Proton acceptor of the active site. 3 residues coordinate pyruvate: Arg49, Thr73, and Lys133. Lys133 functions as the Schiff-base intermediate with substrate in the catalytic mechanism.

This sequence belongs to the KHG/KDPG aldolase family. Homotrimer.

It localises to the cytoplasm. The enzyme catalyses 2-dehydro-3-deoxy-6-phospho-D-gluconate = D-glyceraldehyde 3-phosphate + pyruvate. It participates in carbohydrate acid metabolism; 2-dehydro-3-deoxy-D-gluconate degradation; D-glyceraldehyde 3-phosphate and pyruvate from 2-dehydro-3-deoxy-D-gluconate: step 2/2. Functionally, involved in the degradation of glucose via the Entner-Doudoroff pathway. Catalyzes the reversible, stereospecific retro-aldol cleavage of 2-keto-3-deoxy-6-phosphogluconate (KDPG) to pyruvate and D-glyceraldehyde-3-phosphate. This is 2-dehydro-3-deoxy-phosphogluconate aldolase (eda) from Haemophilus influenzae (strain ATCC 51907 / DSM 11121 / KW20 / Rd).